The following is an 817-amino-acid chain: Protein Jade-3 (817 aa).

The interval 1-38 (MKRLRNLSSSDSSDNESPSTSFSSCFQHKGKGKCTADD) is disordered. The span at 8–24 (SSSDSSDNESPSTSFSS) shows a compositional bias: low complexity. Residues 202 to 252 (DVICDVCRSPDSEEGNDMVFCDRCNICVHQACYGILKVPEGSWLCRTCVLG) form a PHD-type 1 zinc finger. A C2HC pre-PHD-type zinc finger spans residues 254–288 (HPQCILCPKTGGAMKATRTGTKWAHVSCALWIPEV). The PHD-type 2 zinc finger occupies 312–368 (LVCSLCKLKTGACIQCSVKSCITAFHVTCAFEHSLEMKTILDEGDEVKFKSYCLKHS). Disordered regions lie at residues 375 to 396 (ISEQ…SERT), 665 to 689 (NGVL…QNSE), and 719 to 817 (LVRT…SVQR). A compositionally biased stretch (basic and acidic residues) spans 379–396 (EEPHKTHSDNRPTESERT). The segment covering 667–689 (VLSSGDRTQRDSSSQTSPGQNSE) has biased composition (polar residues). The span at 722–743 (TTEDLRSSEKPQRRQSVKERLW) shows a compositional bias: basic and acidic residues. Residues 747–758 (PADTQTSGTPYQ) are compositionally biased toward polar residues. The segment covering 777-799 (DENKDHMLLRRNSRESPNRDSCR) has biased composition (basic and acidic residues). Residues 801-810 (SRIRGKRKMT) show a composition bias toward basic residues.

This sequence belongs to the JADE family. Component of the HBO1 complex.

Functionally, scaffold subunit of some HBO1 complexes, which have a histone H4 acetyltransferase activity. The sequence is that of Protein Jade-3 (jade3) from Xenopus tropicalis (Western clawed frog).